The primary structure comprises 386 residues: Oxytocin receptor (386 aa).

Residues 1-31 (MEGVLAANWSAEAVNSSAAPPEAEGNRTAGP) form a disordered region. Topologically, residues 1–38 (MEGVLAANWSAEAVNSSAAPPEAEGNRTAGPPQRNEAL) are extracellular. 3 N-linked (GlcNAc...) asparagine glycosylation sites follow: N8, N15, and N26. Residues 39-63 (ARVEVAVLCLILFLALSGNACVLLA) traverse the membrane as a helical segment. Residues 64-74 (LRTTRHKHSRL) are Cytoplasmic-facing. Residues 75–97 (FFFMKHLSIADLVVAVFQVLPQL) form a helical membrane-spanning segment. Over 98 to 113 (LWDITFRFYGPDLLCR) the chain is Extracellular. A disulfide bridge connects residues C112 and C187. A helical transmembrane segment spans residues 114-135 (LVKYLQVVGMFASTYLLLLMSL). Topologically, residues 136–154 (DRCLAICQPLRALRRPADR) are cytoplasmic. A helical transmembrane segment spans residues 155 to 175 (LAVLATWLGCLVASAPQVHIF). At 176–202 (SLREVADGVFDCWAVFIQPWGPKAYIT) the chain is on the extracellular side. Residues 203–225 (WITLAVYIVPVIVLAACYGLISF) form a helical membrane-spanning segment. The Cytoplasmic segment spans residues 226-277 (KIWQNLRLKTAAEAAEAIAGTEGAAAGSRGRAALARVSSVKLISKAKIRTVK). Residues 278–296 (MTFIIVLAFIVCWTPFFFV) traverse the membrane as a helical segment. The Extracellular segment spans residues 297–311 (QMWSVWDADAPKEAS). The helical transmembrane segment at 312–334 (AFIIAMLLASLNSCCNPWIYMLF) threads the bilayer. Residues 335–386 (TGHLFHELVQRFLCCSSSHLKTSRPGETSVSKKSNSSTFVLSQHSSSQKSCS) lie on the Cytoplasmic side of the membrane. Residues 355–375 (KTSRPGETSVSKKSNSSTFVL) show a composition bias toward polar residues. The tract at residues 355–386 (KTSRPGETSVSKKSNSSTFVLSQHSSSQKSCS) is disordered. Phosphoserine is present on residues S368 and S370. Over residues 376 to 386 (SQHSSSQKSCS) the composition is skewed to low complexity.

Belongs to the G-protein coupled receptor 1 family. Vasopressin/oxytocin receptor subfamily.

Its subcellular location is the cell membrane. Its function is as follows. Receptor for oxytocin. The activity of this receptor is mediated by G proteins which activate a phosphatidylinositol-calcium second messenger system. This is Oxytocin receptor (OXTR) from Sus scrofa (Pig).